A 115-amino-acid polypeptide reads, in one-letter code: uncharacterized protein (115 aa).

This is an uncharacterized protein from Spirochaeta aurantia.